The primary structure comprises 638 residues: NBPF family member NBPF4 (638 aa).

Coiled-coil stretches lie at residues 10–43 (SERA…EKFL) and 69–115 (DSVL…KLRE). Residues 157–285 (HLVHKLSPEN…VPPRHHDKSN (129 aa)) are disordered. The span at 165 to 179 (ENDEDEDEDEDDKDE) shows a compositional bias: acidic residues. In terms of domain architecture, Olduvai 1 spans 174-261 (EDDKDEEVEK…EEEEALNIPP (88 aa)). Basic and acidic residues predominate over residues 192 to 202 (EVQKTEEKEVP). Positions 214 to 226 (SNSHNPSNSNQPH) are enriched in low complexity. 2 stretches are compositionally biased toward basic and acidic residues: residues 232–251 (TFKE…HPHD) and 264–273 (QNDHEEEEGK). Olduvai domains follow at residues 326-399 (EKQS…ALVD) and 400-503 (KIKK…SQAQ). The interval 562 to 584 (GMKNPPQLEDDALEGSASNTQGR) is disordered.

It belongs to the NBPF family. Expressed in testis.

It localises to the cytoplasm. The sequence is that of NBPF family member NBPF4 from Homo sapiens (Human).